The sequence spans 376 residues: Sterol 24-C-methyltransferase (376 aa).

Belongs to the class I-like SAM-binding methyltransferase superfamily. Erg6/SMT family.

It carries out the reaction zymosterol + S-adenosyl-L-methionine = fecosterol + S-adenosyl-L-homocysteine + H(+). It functions in the pathway steroid metabolism; ergosterol biosynthesis; ergosterol from zymosterol: step 1/5. With respect to regulation, substrate analogs 25-azalanosterol and 24(R,S),25-epiminolanosterol act as inhibitors. Functionally, sterol 24-C-methyltransferase; part of the third module of ergosterol biosynthesis pathway that includes the late steps of the pathway. ERG6 catalyzes the methyl transfer from S-adenosyl-methionine to the C-24 of zymosterol to form fecosterol. The third module or late pathway involves the ergosterol synthesis itself through consecutive reactions that mainly occur in the endoplasmic reticulum (ER) membrane. Firstly, the squalene synthase ERG9 catalyzes the condensation of 2 farnesyl pyrophosphate moieties to form squalene, which is the precursor of all steroids. Squalene synthase is crucial for balancing the incorporation of farnesyl diphosphate (FPP) into sterol and nonsterol isoprene synthesis. Secondly, the squalene epoxidase ERG1 catalyzes the stereospecific oxidation of squalene to (S)-2,3-epoxysqualene, which is considered to be a rate-limiting enzyme in steroid biosynthesis. Then, the lanosterol synthase ERG7 catalyzes the cyclization of (S)-2,3 oxidosqualene to lanosterol, a reaction that forms the sterol core. In the next steps, lanosterol is transformed to zymosterol through a complex process involving various demethylation, reduction and desaturation reactions. The lanosterol 14-alpha-demethylase ERG11 (also known as CYP51) catalyzes C14-demethylation of lanosterol to produce 4,4'-dimethyl cholesta-8,14,24-triene-3-beta-ol, which is critical for ergosterol biosynthesis. The C-14 reductase ERG24 reduces the C14=C15 double bond of 4,4-dimethyl-cholesta-8,14,24-trienol to produce 4,4-dimethyl-cholesta-8,24-dienol. 4,4-dimethyl-cholesta-8,24-dienol is substrate of the C-4 demethylation complex ERG25-ERG26-ERG27 in which ERG25 catalyzes the three-step monooxygenation required for the demethylation of 4,4-dimethyl and 4alpha-methylsterols, ERG26 catalyzes the oxidative decarboxylation that results in a reduction of the 3-beta-hydroxy group at the C-3 carbon to an oxo group, and ERG27 is responsible for the reduction of the keto group on the C-3. ERG28 has a role as a scaffold to help anchor ERG25, ERG26 and ERG27 to the endoplasmic reticulum and ERG29 regulates the activity of the iron-containing C4-methylsterol oxidase ERG25. Then, the sterol 24-C-methyltransferase ERG6 catalyzes the methyl transfer from S-adenosyl-methionine to the C-24 of zymosterol to form fecosterol. The C-8 sterol isomerase ERG2 catalyzes the reaction which results in unsaturation at C-7 in the B ring of sterols and thus converts fecosterol to episterol. The sterol-C5-desaturase ERG3 then catalyzes the introduction of a C-5 double bond in the B ring to produce 5-dehydroepisterol. The C-22 sterol desaturase ERG5 further converts 5-dehydroepisterol into ergosta-5,7,22,24(28)-tetraen-3beta-ol by forming the C-22(23) double bond in the sterol side chain. Finally, ergosta-5,7,22,24(28)-tetraen-3beta-ol is substrate of the C-24(28) sterol reductase ERG4 to produce ergosterol. The sequence is that of Sterol 24-C-methyltransferase from Candida albicans (strain SC5314 / ATCC MYA-2876) (Yeast).